The primary structure comprises 436 residues: MSGATSGLTPEQIGAIDAAHLWHPYSTIGAATGVIPPVVAVAAHGAWLTLIRDGKPIEALDAMSSWWTAIHGHGHSVLDAALTTQLGAMNHVMFGGLTHEPAARLAQLLVDITPAGLETVFFSDSGSVSVQVAVKMALQYWRSRGQPAKRRLMTWRGGYHGDTLTPMSICDPDGGMHSLWTDILARQVFAPQVPRDYDPAYSKAFETQLAQHTPELAAVVVEPVVQGAGGMRFHDPRYLCDVRDICRRHDVLLIFDEIATGFGRTGELFAADHCGVSPDIMCVGKALTGGYLSLAATLCTTDIAHAISVGAAGALMHGPTFMANPLACAVSVASVEVLLGQDWRSRVAEISAGLTAGLEAAQGLPGVIDVRVCGAIGVIECDRSVDLAVATPAALDRRVWLRPFRNLVYAMPPYICPPAEIAQITSAMVEVAGLVG.

Position 66 (W66) interacts with substrate. Residue 126–127 coordinates pyridoxal 5'-phosphate; that stretch reads GS. Substrate is bound at residue Y159. D256 contributes to the pyridoxal 5'-phosphate binding site. The substrate site is built by K285 and G318. K285 is modified (N6-(pyridoxal phosphate)lysine). 319-320 is a binding site for pyridoxal 5'-phosphate; sequence PT. R402 contributes to the substrate binding site.

The protein belongs to the class-III pyridoxal-phosphate-dependent aminotransferase family. BioA subfamily. In terms of assembly, homodimer. Requires pyridoxal 5'-phosphate as cofactor.

It localises to the cytoplasm. The enzyme catalyses (8S)-8-amino-7-oxononanoate + S-adenosyl-L-methionine = S-adenosyl-4-methylsulfanyl-2-oxobutanoate + (7R,8S)-7,8-diammoniononanoate. Its pathway is cofactor biosynthesis; biotin biosynthesis; 7,8-diaminononanoate from 8-amino-7-oxononanoate (SAM route): step 1/1. Its function is as follows. Catalyzes the transfer of the alpha-amino group from S-adenosyl-L-methionine (SAM) to 7-keto-8-aminopelargonic acid (KAPA) to form 7,8-diaminopelargonic acid (DAPA). It is the only aminotransferase known to utilize SAM as an amino donor. The sequence is that of Adenosylmethionine-8-amino-7-oxononanoate aminotransferase from Mycobacterium leprae (strain TN).